Consider the following 378-residue polypeptide: MLPPQPSAAHQGRGGRSGLLPKGPAMLCRLCWLVSYSLAVLLLGCLLFLRKAAKPAGDPTAHQPFWAPPTPRHSRCPPNHTVSSASLSLPSRHRLFLTYRHCRNFSILLEPSGCSKDTFLLLAIKSQPGHVERRAAIRSTWGRVGGWARGRQLKLVFLLGVAGSAPPAQLLAYESREFDDILQWDFTEDFFNLTLKELHLQRWVVAACPQAHFMLKGDDDVFVHVPNVLEFLDGWDPAQDLLVGDVIRQALPNRNTKVKYFIPPSMYRATHYPPYAGGGGYVMSRATVRRLQAIMEDAELFPIDDVFVGMCLRRLGLSPMHHAGFKTFGIRRPLDPLDPCLYRGLLLVHRLSPLEMWTMWALVTDEGLKCAAGPIPQR.

At 1–28 (MLPPQPSAAHQGRGGRSGLLPKGPAMLC) the chain is on the cytoplasmic side. The helical; Signal-anchor for type II membrane protein transmembrane segment at 29–49 (RLCWLVSYSLAVLLLGCLLFL) threads the bilayer. Residues 50-378 (RKAAKPAGDP…KCAAGPIPQR (329 aa)) are Lumenal-facing. Positions 59-81 (PTAHQPFWAPPTPRHSRCPPNHT) are disordered. A glycan (N-linked (GlcNAc...) asparagine) is linked at N192.

Belongs to the glycosyltransferase 31 family. Mainly expressed in brain tissues such as whole brain, hippocampus, amygdala, cerebellum and caudate nucleus. Also expressed in colon, esophagus and kidney.

The protein resides in the golgi apparatus membrane. The catalysed reaction is a beta-D-galactosyl-(1-&gt;4)-N-acetyl-beta-D-glucosaminyl derivative + UDP-N-acetyl-alpha-D-glucosamine = an N-acetyl-beta-D-glucosaminyl-(1-&gt;3)-beta-D-galactosyl-(1-&gt;4)-N-acetyl-beta-D-glucosaminyl derivative + UDP + H(+). It functions in the pathway protein modification; protein glycosylation. Its function is as follows. Beta-1,3-N-acetylglucosaminyltransferase involved in the synthesis of poly-N-acetyllactosamine. Has activity for type 2 oligosaccharides. The polypeptide is N-acetyllactosaminide beta-1,3-N-acetylglucosaminyltransferase 4 (B3GNT4) (Homo sapiens (Human)).